The chain runs to 235 residues: Cobalt transport protein CbiM (235 aa).

The next 6 membrane-spanning stretches (helical) occupy residues 6-26 (GVLPPVQCAIWFAAAAPFVVH), 43-63 (LLLATAGACTFLLSSIKLPSV), 85-105 (MAFMGLIVLIFQALLLAHGGI), 108-128 (LGANTFSMAIVGPWVGYGAYV), 133-153 (LGGPLALGIFLAMFLSDLSTY), and 181-201 (IFAISQIPLSVAEGILGILLF).

It belongs to the CbiM family. As to quaternary structure, forms an energy-coupling factor (ECF) transporter complex composed of an ATP-binding protein (A component, CbiO), a transmembrane protein (T component, CbiQ) and 2 possible substrate-capture proteins (S components, CbiM and CbiN) of unknown stoichimetry.

The protein resides in the cell membrane. Its pathway is cofactor biosynthesis; adenosylcobalamin biosynthesis. Its function is as follows. Part of the energy-coupling factor (ECF) transporter complex CbiMNOQ involved in cobalt import. The polypeptide is Cobalt transport protein CbiM (Propionibacterium freudenreichii subsp. shermanii (strain ATCC 9614 / DSM 4902 / CIP 103027 / NCIMB 8099 / CIRM-BIA1)).